The primary structure comprises 290 residues: ATP synthase gamma chain (290 aa).

This sequence belongs to the ATPase gamma chain family. In terms of assembly, F-type ATPases have 2 components, CF(1) - the catalytic core - and CF(0) - the membrane proton channel. CF(1) has five subunits: alpha(3), beta(3), gamma(1), delta(1), epsilon(1). CF(0) has three main subunits: a, b and c.

Its subcellular location is the cell inner membrane. In terms of biological role, produces ATP from ADP in the presence of a proton gradient across the membrane. The gamma chain is believed to be important in regulating ATPase activity and the flow of protons through the CF(0) complex. This Phenylobacterium zucineum (strain HLK1) protein is ATP synthase gamma chain.